Reading from the N-terminus, the 233-residue chain is tRNA (guanine-N(7)-)-methyltransferase (233 aa).

The disordered stretch occupies residues 1 to 22 (MIDENHPMRAAGNFFGRRHGKP). The S-adenosyl-L-methionine site is built by Glu-64, Glu-89, Asp-116, and Asp-138. Asp-138 is an active-site residue. Residues Lys-142, Asp-174, and 212–215 (TRYE) each bind substrate.

It belongs to the class I-like SAM-binding methyltransferase superfamily. TrmB family.

The enzyme catalyses guanosine(46) in tRNA + S-adenosyl-L-methionine = N(7)-methylguanosine(46) in tRNA + S-adenosyl-L-homocysteine. The protein operates within tRNA modification; N(7)-methylguanine-tRNA biosynthesis. Catalyzes the formation of N(7)-methylguanine at position 46 (m7G46) in tRNA. The polypeptide is tRNA (guanine-N(7)-)-methyltransferase (Brucella melitensis biotype 1 (strain ATCC 23456 / CCUG 17765 / NCTC 10094 / 16M)).